The primary structure comprises 104 residues: Small ribosomal subunit protein uS10 (104 aa).

It belongs to the universal ribosomal protein uS10 family. In terms of assembly, part of the 30S ribosomal subunit.

Involved in the binding of tRNA to the ribosomes. This Helicobacter pylori (strain P12) protein is Small ribosomal subunit protein uS10.